Here is a 245-residue protein sequence, read N- to C-terminus: tRNA (guanine-N(1)-)-methyltransferase (245 aa).

S-adenosyl-L-methionine is bound by residues G111 and I131 to L136.

The protein belongs to the RNA methyltransferase TrmD family. As to quaternary structure, homodimer.

It localises to the cytoplasm. The catalysed reaction is guanosine(37) in tRNA + S-adenosyl-L-methionine = N(1)-methylguanosine(37) in tRNA + S-adenosyl-L-homocysteine + H(+). In terms of biological role, specifically methylates guanosine-37 in various tRNAs. The polypeptide is tRNA (guanine-N(1)-)-methyltransferase (Staphylococcus carnosus (strain TM300)).